The sequence spans 72 residues: Translation initiation factor IF-1 (72 aa).

An S1-like domain is found at 1 to 72; it reads MSKDDSIEFE…TKGRITYRMK (72 aa).

This sequence belongs to the IF-1 family. As to quaternary structure, component of the 30S ribosomal translation pre-initiation complex which assembles on the 30S ribosome in the order IF-2 and IF-3, IF-1 and N-formylmethionyl-tRNA(fMet); mRNA recruitment can occur at any time during PIC assembly.

It localises to the cytoplasm. Its function is as follows. One of the essential components for the initiation of protein synthesis. Stabilizes the binding of IF-2 and IF-3 on the 30S subunit to which N-formylmethionyl-tRNA(fMet) subsequently binds. Helps modulate mRNA selection, yielding the 30S pre-initiation complex (PIC). Upon addition of the 50S ribosomal subunit IF-1, IF-2 and IF-3 are released leaving the mature 70S translation initiation complex. This is Translation initiation factor IF-1 from Xanthomonas euvesicatoria pv. vesicatoria (strain 85-10) (Xanthomonas campestris pv. vesicatoria).